Here is a 232-residue protein sequence, read N- to C-terminus: LexA repressor (232 aa).

Residues 1–25 (MSDDSSDSTSGAGSGRGRDSGLTER) are disordered. The span at 16–25 (RGRDSGLTER) shows a compositional bias: basic and acidic residues. Positions 46 to 66 (IREIGDAVGLTSTSSVAHQLR) form a DNA-binding region, H-T-H motif. Residues serine 156 and lysine 193 each act as for autocatalytic cleavage activity in the active site.

The protein belongs to the peptidase S24 family. Homodimer.

It catalyses the reaction Hydrolysis of Ala-|-Gly bond in repressor LexA.. Functionally, represses a number of genes involved in the response to DNA damage (SOS response), including recA and lexA. In the presence of single-stranded DNA, RecA interacts with LexA causing an autocatalytic cleavage which disrupts the DNA-binding part of LexA, leading to derepression of the SOS regulon and eventually DNA repair. In Mycolicibacterium vanbaalenii (strain DSM 7251 / JCM 13017 / BCRC 16820 / KCTC 9966 / NRRL B-24157 / PYR-1) (Mycobacterium vanbaalenii), this protein is LexA repressor.